Consider the following 131-residue polypeptide: Small ribosomal subunit protein uS11 (131 aa).

This sequence belongs to the universal ribosomal protein uS11 family. In terms of assembly, part of the 30S ribosomal subunit. Interacts with proteins S7 and S18. Binds to IF-3.

Functionally, located on the platform of the 30S subunit, it bridges several disparate RNA helices of the 16S rRNA. Forms part of the Shine-Dalgarno cleft in the 70S ribosome. The sequence is that of Small ribosomal subunit protein uS11 from Buchnera aphidicola subsp. Acyrthosiphon pisum (strain 5A).